Reading from the N-terminus, the 478-residue chain is Alpha-1,3-mannosyl-glycoprotein 4-beta-N-acetylglucosaminyltransferase C (478 aa).

Residues 1 to 23 (MFKFHQVKHIFEILDKMRCLRKR) lie on the Cytoplasmic side of the membrane. A helical; Signal-anchor for type II membrane protein membrane pass occupies residues 24-44 (FTVSFLGVLVIFLLFMNLYIE). The Lumenal segment spans residues 45 to 478 (DSYVLEGDKQ…IIRSISIWTS (434 aa)). 3 N-linked (GlcNAc...) asparagine glycosylation sites follow: N84, N215, and N348.

This sequence belongs to the glycosyltransferase 54 family. The cofactor is a divalent metal cation.

Its subcellular location is the golgi apparatus membrane. The catalysed reaction is N(4)-{beta-D-GlcNAc-(1-&gt;2)-alpha-D-Man-(1-&gt;3)-[beta-D-GlcNAc-(1-&gt;2)-alpha-D-Man-(1-&gt;6)]-beta-D-Man-(1-&gt;4)-beta-D-GlcNAc-(1-&gt;4)-beta-D-GlcNAc}-L-asparaginyl-[protein] + UDP-N-acetyl-alpha-D-glucosamine = N(4)-{beta-D-GlcNAc-(1-&gt;2)-[beta-D-GlcNAc-(1-&gt;4)]-alpha-D-Man-(1-&gt;3)-[beta-D-GlcNAc-(1-&gt;2)-alpha-D-Man-(1-&gt;6)]-beta-D-Man-(1-&gt;4)-beta-D-GlcNAc-(1-&gt;4)-beta-D-GlcNAc}-L-asparaginyl-[protein] + UDP + H(+). Its pathway is protein modification; protein glycosylation. Its function is as follows. Glycosyltransferase that participates in the transfer of N-acetylglucosamine (GlcNAc) to the core mannose residues of N-linked glycans. Catalyzes the formation of the GlcNAcbeta1-4 branch on the GlcNAcbeta1-2Manalpha1-3 arm of the core structure of N-linked glycans. Essential for the production of tri- and tetra-antennary N-linked sugar chains. Does not catalyze the transfer of GlcNAc to the Manalpha1-6 arm to form GlcNAcBeta1-4Manalpha1-6 linkage ('GnT-VI' activity). In Sus scrofa (Pig), this protein is Alpha-1,3-mannosyl-glycoprotein 4-beta-N-acetylglucosaminyltransferase C (MGAT4C).